Reading from the N-terminus, the 171-residue chain is Der GTPase-activating protein YihI (171 aa).

Disordered stretches follow at residues 1–99 and 145–171; these read MKKP…QAEL and LSYD…RGGN. Over residues 20–30 the composition is skewed to basic and acidic residues; it reads TREELNQEARD. Residues 31–40 show a composition bias toward basic residues; the sequence is RKRLKKHRGH. The span at 147 to 160 shows a compositional bias: acidic residues; the sequence is YDDDEEDDEEDEKQ.

It belongs to the YihI family. As to quaternary structure, interacts with Der.

Functionally, a GTPase-activating protein (GAP) that modifies Der/EngA GTPase function. May play a role in ribosome biogenesis. This is Der GTPase-activating protein YihI from Salmonella agona (strain SL483).